The primary structure comprises 188 residues: Phosphoheptose isomerase (188 aa).

An SIS domain is found at 33–188 (VTASLRAGGK…CGLVEDALCS (156 aa)). 48 to 50 (NGG) contacts substrate. Zn(2+) contacts are provided by H57 and E61. Residues E61, 90 to 91 (ND), 116 to 118 (STS), S121, and Q168 each bind substrate. Residues Q168 and H176 each contribute to the Zn(2+) site.

The protein belongs to the SIS family. GmhA subfamily. Homotetramer. Zn(2+) serves as cofactor.

It is found in the cytoplasm. The enzyme catalyses 2 D-sedoheptulose 7-phosphate = D-glycero-alpha-D-manno-heptose 7-phosphate + D-glycero-beta-D-manno-heptose 7-phosphate. Its pathway is carbohydrate biosynthesis; D-glycero-D-manno-heptose 7-phosphate biosynthesis; D-glycero-alpha-D-manno-heptose 7-phosphate and D-glycero-beta-D-manno-heptose 7-phosphate from sedoheptulose 7-phosphate: step 1/1. Functionally, catalyzes the isomerization of sedoheptulose 7-phosphate in D-glycero-D-manno-heptose 7-phosphate. The chain is Phosphoheptose isomerase from Rhodospirillum rubrum (strain ATCC 11170 / ATH 1.1.1 / DSM 467 / LMG 4362 / NCIMB 8255 / S1).